The following is a 721-amino-acid chain: Dolichyl-diphosphooligosaccharide--protein glycosyltransferase subunit STT3B (721 aa).

Over 1-25 (MAAATALDSLPAPLRSLRLKTKQQE) the chain is Cytoplasmic. The chain crosses the membrane as a helical span at residues 26-46 (LLLRVSALALIYVLAFVVRLF). The Lumenal portion of the chain corresponds to 47–129 (SVLRYESMIH…VHIREVCVLT (83 aa)). A DXD motif 1 motif is present at residues 57 to 59 (EFD). Asp-59 lines the Mn(2+) pocket. A helical membrane pass occupies residues 130-148 (APFFAANTTLVAYAFGREI). Over 149-150 (WD) the chain is Cytoplasmic. A helical membrane pass occupies residues 151–168 (SGAGLVAAALIAVCPGYI). At 169 to 179 (SRSVAGSYDNE) the chain is on the lumenal side. The Mn(2+) site is built by Asp-177 and Glu-179. The DXD motif 2 signature appears at 177–179 (DNE). Residues 180–199 (GVAIFALLLTFYLFVRAVNT) traverse the membrane as a helical segment. The Cytoplasmic segment spans residues 200 to 201 (GS). The helical transmembrane segment at 202–216 (LAWSLASAFGYFYMV) threads the bilayer. Over 217–221 (SAWGG) the chain is Lumenal. A helical membrane pass occupies residues 222 to 238 (YVFIINLLPLYVLVLLV). The Cytoplasmic portion of the chain corresponds to 239–243 (TGRYS). The chain crosses the membrane as a helical span at residues 244-269 (QRLYVAYNSTYVLGMLLAMQIRFVGF). Over 270-277 (QHVQSGEH) the chain is Lumenal. A helical membrane pass occupies residues 278-297 (MAAMGVFFLLQVFFFLDWVK). Residues 298–313 (YLLNDAKLFKSFLRIT) are Cytoplasmic-facing. Residues 314–334 (LTCVITVGTLALGIGTASGYI) traverse the membrane as a helical segment. Over 335–367 (SPWTGRFYSLLDPTYAKDHIPIIASVSEHQPTA) the chain is Lumenal. The SVSE motif motif lies at 359–362 (SVSE). A helical transmembrane segment spans residues 368-390 (WSSFMFDFHILLFLFPAGLYFCF). Over 391–396 (KRLSDA) the chain is Cytoplasmic. The helical transmembrane segment at 397–413 (TIFIVMYGLTSMYFAGV) threads the bilayer. At 414–417 (MVRL) the chain is on the lumenal side. Arg-416 serves as a coordination point for dolichyl diphosphooligosaccharide. A helical transmembrane segment spans residues 418–439 (ILVAAPAVCLISAIAASATIKN). Over 440-471 (LTTLIRTKSKSPQTVSGKSSGSKAAAKGAVDQ) the chain is Cytoplasmic. A helical transmembrane segment spans residues 472 to 492 (SLPFQQNVAIALLLGAFYLLS). Residues 493 to 721 (RYAVHCTWVT…YKVKPPKNRS (229 aa)) lie on the Lumenal side of the membrane. The tract at residues 548 to 550 (WWD) is interacts with target acceptor peptide in protein substrate. Positions 548 to 552 (WWDYG) match the WWDYG motif motif. A dolichyl diphosphooligosaccharide-binding site is contributed by Tyr-553. Residues Asn-560 and Asn-567 are each glycosylated (N-linked (GlcNAc...) asparagine). Asn-571 carries an N-linked (GlcNAc...) (high mannose) asparagine glycan. Residues 615–622 (DINKFLWM) carry the DK motif motif.

Belongs to the STT3 family. As to quaternary structure, component of the oligosaccharyltransferase (OST) complex. Mg(2+) serves as cofactor. Mn(2+) is required as a cofactor.

The protein localises to the endoplasmic reticulum membrane. It carries out the reaction a di-trans,poly-cis-dolichyl diphosphooligosaccharide + L-asparaginyl-[protein] = N(4)-(oligosaccharide-(1-&gt;4)-N-acetyl-beta-D-glucosaminyl-(1-&gt;4)-N-acetyl-beta-D-glucosaminyl)-L-asparaginyl-[protein] + a di-trans,poly-cis-dolichyl diphosphate + H(+). Its pathway is protein modification; protein glycosylation. In terms of biological role, catalytic subunit of the oligosaccharyl transferase (OST) complex that catalyzes the initial transfer of a defined glycan (Glc(3)Man(9)GlcNAc(2) in eukaryotes) from the lipid carrier dolichol-pyrophosphate to an asparagine residue within an Asn-X-Ser/Thr consensus motif in nascent polypeptide chains, the first step in protein N-glycosylation. N-glycosylation occurs cotranslationally and the complex associates with the Sec61 complex at the channel-forming translocon complex that mediates protein translocation across the endoplasmic reticulum (ER). All subunits are required for a maximal enzyme activity. This subunit contains the active site and the acceptor peptide and donor lipid-linked oligosaccharide (LLO) binding pockets. This chain is Dolichyl-diphosphooligosaccharide--protein glycosyltransferase subunit STT3B (STT3B), found in Oryza sativa subsp. japonica (Rice).